A 950-amino-acid polypeptide reads, in one-letter code: Nonsense-mediated mRNA decay factor SMG8 (950 aa).

Disordered stretches follow at residues 560–607 and 624–651; these read HTGK…LSPT and NESQASSEQLSNSEQNSTSSGTSSADTE. Over residues 568-582 the composition is skewed to acidic residues; the sequence is QDEDGEEDAEDEEGQ. A compositionally biased stretch (polar residues) spans 593-607; that stretch reads QNTASNGCSQPLSPT. Residues 624-648 are compositionally biased toward low complexity; the sequence is NESQASSEQLSNSEQNSTSSGTSSA.

Belongs to the SMG8 family.

Its function is as follows. Involved in nonsense-mediated decay (NMD) of mRNAs containing premature stop codons. Probable component of kinase complex containing nonC and recruited to stalled ribosomes. In Drosophila yakuba (Fruit fly), this protein is Nonsense-mediated mRNA decay factor SMG8.